The sequence spans 682 residues: DNA ligase (682 aa).

Residues 38–42 (DAEYD), 87–88 (SI), and Glu119 each bind NAD(+). Residue Lys121 is the N6-AMP-lysine intermediate of the active site. Residues Arg142, Glu181, Lys298, and Lys322 each coordinate NAD(+). Zn(2+)-binding residues include Cys416, Cys419, Cys434, and Cys439. The BRCT domain occupies 601–682 (GHEMPLAGKT…LLSLLEPGER (82 aa)).

The protein belongs to the NAD-dependent DNA ligase family. LigA subfamily. It depends on Mg(2+) as a cofactor. Mn(2+) serves as cofactor.

The enzyme catalyses NAD(+) + (deoxyribonucleotide)n-3'-hydroxyl + 5'-phospho-(deoxyribonucleotide)m = (deoxyribonucleotide)n+m + AMP + beta-nicotinamide D-nucleotide.. In terms of biological role, DNA ligase that catalyzes the formation of phosphodiester linkages between 5'-phosphoryl and 3'-hydroxyl groups in double-stranded DNA using NAD as a coenzyme and as the energy source for the reaction. It is essential for DNA replication and repair of damaged DNA. This chain is DNA ligase, found in Desulfosudis oleivorans (strain DSM 6200 / JCM 39069 / Hxd3) (Desulfococcus oleovorans).